Here is a 161-residue protein sequence, read N- to C-terminus: Zinc finger A20 and AN1 domain-containing stress-associated protein 4 (161 aa).

The A20-type zinc-finger motif lies at 10 to 44 (PEGHRLCVNNCGFFGSSATMNLCSNCYGDLCLKQQ). The Zn(2+) site is built by cysteine 16, cysteine 20, cysteine 32, and cysteine 35. The segment covering 76-85 (TTKKTEEKKP) has biased composition (basic and acidic residues). Residues 76 to 99 (TTKKTEEKKPIQIPTEQPSPPQRP) form a disordered region. The AN1-type zinc-finger motif lies at 96–142 (PQRPNRCTVCRKRVGLTGFMCRCGTTFCGSHRYPEVHGCTFDFKSAG). 8 residues coordinate Zn(2+): cysteine 102, cysteine 105, cysteine 116, cysteine 118, cysteine 123, histidine 126, histidine 132, and cysteine 134.

Functionally, may be involved in environmental stress response. The chain is Zinc finger A20 and AN1 domain-containing stress-associated protein 4 (SAP4) from Arabidopsis thaliana (Mouse-ear cress).